Reading from the N-terminus, the 254-residue chain is Proteasome subunit alpha (254 aa).

Positions 234–254 (EEMLPTPAATEDAPANGDAPS) are disordered.

This sequence belongs to the peptidase T1A family. As to quaternary structure, the 20S proteasome core is composed of 14 alpha and 14 beta subunits that assemble into four stacked heptameric rings, resulting in a barrel-shaped structure. The two inner rings, each composed of seven catalytic beta subunits, are sandwiched by two outer rings, each composed of seven alpha subunits. The catalytic chamber with the active sites is on the inside of the barrel. Has a gated structure, the ends of the cylinder being occluded by the N-termini of the alpha-subunits. Is capped by the proteasome-associated ATPase, ARC.

It is found in the cytoplasm. Its pathway is protein degradation; proteasomal Pup-dependent pathway. With respect to regulation, the formation of the proteasomal ATPase ARC-20S proteasome complex, likely via the docking of the C-termini of ARC into the intersubunit pockets in the alpha-rings, may trigger opening of the gate for substrate entry. Interconversion between the open-gate and close-gate conformations leads to a dynamic regulation of the 20S proteasome proteolysis activity. Functionally, component of the proteasome core, a large protease complex with broad specificity involved in protein degradation. This Rhodococcus erythropolis (strain PR4 / NBRC 100887) protein is Proteasome subunit alpha.